Reading from the N-terminus, the 251-residue chain is Protein FAM216A (251 aa).

Residues 1–41 (MPSRWPGVAGPPALARTEGGEGSAGHSYPQNSKGTGEQHKA) form a disordered region.

It belongs to the FAM216 family.

This Mus musculus (Mouse) protein is Protein FAM216A (Fam216a).